The sequence spans 139 residues: Interleukin-5 (139 aa).

Residues 1–19 (MMKILVCLPLLTLYAGCVY) form the signal peptide. N-linked (GlcNAc...) asparagine glycans are attached at residues Asn-48, Asn-77, and Asn-91.

This sequence belongs to the IL-5 family. In terms of assembly, homodimer; disulfide-linked. Interacts with IL5RA. Interacts with CSF2RB.

It localises to the secreted. In terms of biological role, homodimeric cytokine expressed predominantly by T-lymphocytes and NK cells that plays an important role in the survival, differentiation, and chemotaxis of eosinophils. Also acts on activated and resting B-cells to induce immunoglobulin production, growth, and differentiation. Mechanistically, exerts its biological effects through a receptor composed of IL5RA subunit and the cytokine receptor common subunit beta/CSF2RB. Binding to the receptor leads to activation of various kinases including LYN, SYK and JAK2 and thereby propagates signals through the RAS-MAPK and JAK-STAT5 pathways respectively. The sequence is that of Interleukin-5 (IL5) from Notamacropus eugenii (Tammar wallaby).